The sequence spans 338 residues: Glutamate/glutamine/aspartate/asparagine-binding protein BztA (338 aa).

Positions 1-22 (MKKSAFFGSVALAALVAGAASA) are cleaved as a signal peptide.

This sequence belongs to the bacterial solute-binding protein 3 family.

It localises to the periplasm. Its function is as follows. Part of a binding-protein-dependent transport system for glutamate, glutamine, aspartate and asparagine. The sequence is that of Glutamate/glutamine/aspartate/asparagine-binding protein BztA (bztA) from Rhodobacter capsulatus (strain ATCC BAA-309 / NBRC 16581 / SB1003).